Consider the following 366-residue polypeptide: 3-dehydroquinate synthase (366 aa).

Residues 74–79 (SGEAAK), 108–112 (GVVGD), 132–133 (TT), lysine 144, lysine 153, and 171–174 (FLRT) contribute to the NAD(+) site. 3 residues coordinate Zn(2+): glutamate 186, histidine 249, and histidine 266.

This sequence belongs to the sugar phosphate cyclases superfamily. Dehydroquinate synthase family. It depends on Co(2+) as a cofactor. Zn(2+) serves as cofactor. The cofactor is NAD(+).

It localises to the cytoplasm. It catalyses the reaction 7-phospho-2-dehydro-3-deoxy-D-arabino-heptonate = 3-dehydroquinate + phosphate. Its pathway is metabolic intermediate biosynthesis; chorismate biosynthesis; chorismate from D-erythrose 4-phosphate and phosphoenolpyruvate: step 2/7. Catalyzes the conversion of 3-deoxy-D-arabino-heptulosonate 7-phosphate (DAHP) to dehydroquinate (DHQ). This chain is 3-dehydroquinate synthase, found in Geobacillus kaustophilus (strain HTA426).